The sequence spans 240 residues: MVRLGVNIDHIATLRQARGVDYPDPVEAAMMAIEAGADGITLHLREDRRHIQDDDVRNLKRKLTVPMNLEMATAEDIIQFAEEIKPEHCCLVPEKREELTTEGGLDVAGQQNTLKKVCARLAKVGIEVSLFIDPEEKQIDAAKAAGAPVIEIHTGHYANAKTDHEHNQQLKRIADAAAYADSLGLTVNAGHGLTIHNVQSIAAIPVINELNIGHSIISRGVLIGLAEAVKEMKTLIAGAQ.

Asn7 lines the 3-amino-2-oxopropyl phosphate pocket. A 1-deoxy-D-xylulose 5-phosphate-binding site is contributed by 9–10 (DH). A 3-amino-2-oxopropyl phosphate-binding site is contributed by Arg18. The Proton acceptor role is filled by His43. 2 residues coordinate 1-deoxy-D-xylulose 5-phosphate: Arg45 and His50. Glu70 (proton acceptor) is an active-site residue. 1-deoxy-D-xylulose 5-phosphate is bound at residue Thr100. Catalysis depends on His191, which acts as the Proton donor. 3-amino-2-oxopropyl phosphate is bound by residues Gly192 and 213–214 (GH).

It belongs to the PNP synthase family. In terms of assembly, homooctamer; tetramer of dimers.

It localises to the cytoplasm. The catalysed reaction is 3-amino-2-oxopropyl phosphate + 1-deoxy-D-xylulose 5-phosphate = pyridoxine 5'-phosphate + phosphate + 2 H2O + H(+). The protein operates within cofactor biosynthesis; pyridoxine 5'-phosphate biosynthesis; pyridoxine 5'-phosphate from D-erythrose 4-phosphate: step 5/5. Catalyzes the complicated ring closure reaction between the two acyclic compounds 1-deoxy-D-xylulose-5-phosphate (DXP) and 3-amino-2-oxopropyl phosphate (1-amino-acetone-3-phosphate or AAP) to form pyridoxine 5'-phosphate (PNP) and inorganic phosphate. The sequence is that of Pyridoxine 5'-phosphate synthase from Coxiella burnetii (strain Dugway 5J108-111).